The sequence spans 149 residues: MKVEVCSFSGSKVYPGAGRLFVRGDNKVFRFVNKKSESLFLQRKNPRRLSWTVLYRRMHKKGISEEHAKKRTRRTVKHQRGIVGANLDVIKEKRNQRPEVRAAARAAALKQRKDKKAASESEKKAIKAKSAASSARGQAIKNAKAAARH.

2 stretches are compositionally biased toward basic and acidic residues: residues 93-102 and 116-125; these read KRNQRPEVRA and KAASESEKKA. The segment at 93-149 is disordered; sequence KRNQRPEVRAAARAAALKQRKDKKAASESEKKAIKAKSAASSARGQAIKNAKAAARH.

It belongs to the eukaryotic ribosomal protein eL24 family. In terms of assembly, component of the large ribosomal subunit (LSU). Mature yeast ribosomes consist of a small (40S) and a large (60S) subunit. The 40S small subunit contains 1 molecule of ribosomal RNA (18S rRNA) and at least 33 different proteins. The large 60S subunit contains 3 rRNA molecules (25S, 5.8S and 5S rRNA) and at least 46 different proteins.

The protein resides in the cytoplasm. Component of the ribosome, a large ribonucleoprotein complex responsible for the synthesis of proteins in the cell. The small ribosomal subunit (SSU) binds messenger RNAs (mRNAs) and translates the encoded message by selecting cognate aminoacyl-transfer RNA (tRNA) molecules. The large subunit (LSU) contains the ribosomal catalytic site termed the peptidyl transferase center (PTC), which catalyzes the formation of peptide bonds, thereby polymerizing the amino acids delivered by tRNAs into a polypeptide chain. The nascent polypeptides leave the ribosome through a tunnel in the LSU and interact with protein factors that function in enzymatic processing, targeting, and the membrane insertion of nascent chains at the exit of the ribosomal tunnel. This chain is Large ribosomal subunit protein eL24A (rpl2401), found in Schizosaccharomyces pombe (strain 972 / ATCC 24843) (Fission yeast).